A 226-amino-acid polypeptide reads, in one-letter code: Urease accessory protein UreF (226 aa).

Belongs to the UreF family. UreD, UreF and UreG form a complex that acts as a GTP-hydrolysis-dependent molecular chaperone, activating the urease apoprotein by helping to assemble the nickel containing metallocenter of UreC. The UreE protein probably delivers the nickel.

The protein resides in the cytoplasm. In terms of biological role, required for maturation of urease via the functional incorporation of the urease nickel metallocenter. In Burkholderia ambifaria (strain ATCC BAA-244 / DSM 16087 / CCUG 44356 / LMG 19182 / AMMD) (Burkholderia cepacia (strain AMMD)), this protein is Urease accessory protein UreF.